The following is a 234-amino-acid chain: TATA-box-binding protein 1 (234 aa).

2 repeat units span residues 52–136 (THPE…KKIG) and 142–223 (SNFN…YPIL).

This sequence belongs to the TBP family. Belongs to the TFIID complex together with the TBP-associated factors (TAFs). Binds DNA as monomer.

Its subcellular location is the nucleus. In terms of biological role, general transcription factor that functions at the core of the DNA-binding multiprotein factor TFIID. Binding of TFIID to the TATA box is the initial transcriptional step of the pre-initiation complex (PIC), playing a role in the activation of eukaryotic genes transcribed by RNA polymerase II. This Entamoeba histolytica (strain ATCC 30459 / HM-1:IMSS / ABRM) protein is TATA-box-binding protein 1 (TBP).